We begin with the raw amino-acid sequence, 358 residues long: uncharacterized protein (358 aa).

An ATP-binding site is contributed by 29 to 36 (GPINSGKT).

It belongs to the archaeal ATPase family.

This is an uncharacterized protein from Methanocaldococcus jannaschii (strain ATCC 43067 / DSM 2661 / JAL-1 / JCM 10045 / NBRC 100440) (Methanococcus jannaschii).